The primary structure comprises 319 residues: ATP-dependent 6-phosphofructokinase (319 aa).

Residue G11 coordinates ATP. An ADP-binding site is contributed by 21–25 (RAVVR). Residues 72–73 (RC) and 102–105 (GNGS) contribute to the ATP site. Mg(2+) is bound at residue N103. 125–127 (TID) contacts substrate. The active-site Proton acceptor is the D127. Position 154 (R154) interacts with ADP. Substrate contacts are provided by residues R162 and 169–171 (MGR). ADP is bound by residues 185–187 (GAE), R211, and 213–215 (KMH). Residues E222, R243, and 249–252 (HIQR) contribute to the substrate site.

Belongs to the phosphofructokinase type A (PFKA) family. ATP-dependent PFK group I subfamily. Prokaryotic clade 'B1' sub-subfamily. Homotetramer. It depends on Mg(2+) as a cofactor.

The protein localises to the cytoplasm. The enzyme catalyses beta-D-fructose 6-phosphate + ATP = beta-D-fructose 1,6-bisphosphate + ADP + H(+). It participates in carbohydrate degradation; glycolysis; D-glyceraldehyde 3-phosphate and glycerone phosphate from D-glucose: step 3/4. With respect to regulation, allosterically activated by ADP and other diphosphonucleosides, and allosterically inhibited by phosphoenolpyruvate. In terms of biological role, catalyzes the phosphorylation of D-fructose 6-phosphate to fructose 1,6-bisphosphate by ATP, the first committing step of glycolysis. The polypeptide is ATP-dependent 6-phosphofructokinase (Clostridium acetobutylicum (strain ATCC 824 / DSM 792 / JCM 1419 / IAM 19013 / LMG 5710 / NBRC 13948 / NRRL B-527 / VKM B-1787 / 2291 / W)).